The following is a 201-amino-acid chain: Adenylyl-sulfate kinase (201 aa).

35–42 (GLSGSGKS) is an ATP binding site. The active-site Phosphoserine intermediate is the S109.

Belongs to the APS kinase family.

The enzyme catalyses adenosine 5'-phosphosulfate + ATP = 3'-phosphoadenylyl sulfate + ADP + H(+). It participates in sulfur metabolism; hydrogen sulfide biosynthesis; sulfite from sulfate: step 2/3. Its function is as follows. Catalyzes the synthesis of activated sulfate. The sequence is that of Adenylyl-sulfate kinase from Salmonella typhi.